We begin with the raw amino-acid sequence, 236 residues long: Small ribosomal subunit protein uS2c (236 aa).

This sequence belongs to the universal ribosomal protein uS2 family.

The protein resides in the plastid. This Cuscuta obtusiflora (Peruvian dodder) protein is Small ribosomal subunit protein uS2c (rps2).